The following is a 252-amino-acid chain: MFS-type transporter cctQ (252 aa).

2 helical membrane passes run 54-74 (IGSLMPLVYTTVAFFVAVVLP) and 116-136 (FGSFWVQSAVGTIPLFGIVGF). Asn179 is a glycosylation site (N-linked (GlcNAc...) asparagine). The next 2 membrane-spanning stretches (helical) occupy residues 180–200 (FSICLAQIVVLLMINTVWILA) and 208–228 (FLVWFLLLGGACALLAMYFTT).

The protein belongs to the major facilitator superfamily.

The protein localises to the membrane. The protein operates within mycotoxin biosynthesis. In terms of biological role, MFS-type transporter; part of the gene cluster that mediates the biosynthesis of the mycotoxin cyclochlorotine, a hepatotoxic and carcinogenic cyclic chlorinated pentapeptide. Most likely responsible for cyclochlorotine secretion and thereby may contribute to intrinsic resistance. This chain is MFS-type transporter cctQ, found in Talaromyces islandicus (Penicillium islandicum).